A 495-amino-acid polypeptide reads, in one-letter code: Cysteine--tRNA ligase (495 aa).

Residue Cys-35 participates in Zn(2+) binding. The 'HIGH' region signature appears at 37 to 47 (PTVYSNVHLGN). Zn(2+) is bound by residues Cys-230, His-255, and Glu-259. The 'KMSKS' region signature appears at 287–291 (KMSKS). Lys-290 is an ATP binding site.

Belongs to the class-I aminoacyl-tRNA synthetase family. In terms of assembly, monomer. Zn(2+) is required as a cofactor.

It localises to the cytoplasm. It catalyses the reaction tRNA(Cys) + L-cysteine + ATP = L-cysteinyl-tRNA(Cys) + AMP + diphosphate. The sequence is that of Cysteine--tRNA ligase from Flavobacterium psychrophilum (strain ATCC 49511 / DSM 21280 / CIP 103535 / JIP02/86).